Here is a 753-residue protein sequence, read N- to C-terminus: Fatty acid oxidation complex subunit alpha (753 aa).

Residues 8–197 (SVTHPAFTLN…KMGLVDDVVP (190 aa)) form an enoyl-CoA hydratase region. Residues 313–747 (RAIHRVGVLG…FYPVDANIDE (435 aa)) form a 3-hydroxyacyl-CoA dehydrogenase region. Positions 593–622 (SNPTLHSNSTKNSSPTKNGNSPAKRNSFKW) are disordered. Over residues 599–614 (SNSTKNSSPTKNGNSP) the composition is skewed to low complexity.

It in the N-terminal section; belongs to the enoyl-CoA hydratase/isomerase family. This sequence in the central section; belongs to the 3-hydroxyacyl-CoA dehydrogenase family. In terms of assembly, heterotetramer of two alpha chains (FadJ) and two beta chains (FadI).

The protein localises to the cytoplasm. The enzyme catalyses a (3S)-3-hydroxyacyl-CoA = a (2E)-enoyl-CoA + H2O. The catalysed reaction is a 4-saturated-(3S)-3-hydroxyacyl-CoA = a (3E)-enoyl-CoA + H2O. It catalyses the reaction a (3S)-3-hydroxyacyl-CoA + NAD(+) = a 3-oxoacyl-CoA + NADH + H(+). It carries out the reaction (3S)-3-hydroxybutanoyl-CoA = (3R)-3-hydroxybutanoyl-CoA. Its pathway is lipid metabolism; fatty acid beta-oxidation. In terms of biological role, catalyzes the formation of a hydroxyacyl-CoA by addition of water on enoyl-CoA. Also exhibits 3-hydroxyacyl-CoA epimerase and 3-hydroxyacyl-CoA dehydrogenase activities. The sequence is that of Fatty acid oxidation complex subunit alpha from Yersinia pseudotuberculosis serotype I (strain IP32953).